The following is a 377-amino-acid chain: Leukocyte elastase inhibitor (377 aa).

M1 is subject to N-acetylmethionine.

This sequence belongs to the serpin family. Ov-serpin subfamily.

The protein resides in the cytoplasm. Regulates the activity of the neutrophil proteases. The polypeptide is Leukocyte elastase inhibitor (serpinb1) (Xenopus tropicalis (Western clawed frog)).